The primary structure comprises 314 residues: MKTIYLHHPITTDEWTDINKVMALGFFDGVHLGHQAVIKQAKQIAGQKGLQTAVLTFDPHPSVVLSNIRKQVKYLTPLEDKAEKMAKLGVDIMYVVRFTTQFSELSPQAFVDNYLVALHVEHVVAGFDYSYGKKGEGKMTDLAKYADGRFEVTIVDKQTAASDKISSTNIRRAITEGELEEANQLLGYPYTTKGTVIHGDKRGRTIGFPTANIRVNEDYLIPKLGVYAVKFRVNGETHLGMASIGYNITFKDDQALSIEVYILDFHREIYGEEAEIKWYQFFRPELKFNGVEGLIAQLEKDEQDTRAFFAKLED.

The protein belongs to the RibF family.

The enzyme catalyses riboflavin + ATP = FMN + ADP + H(+). It catalyses the reaction FMN + ATP + H(+) = FAD + diphosphate. It participates in cofactor biosynthesis; FAD biosynthesis; FAD from FMN: step 1/1. It functions in the pathway cofactor biosynthesis; FMN biosynthesis; FMN from riboflavin (ATP route): step 1/1. Catalyzes the phosphorylation of riboflavin to FMN followed by the adenylation of FMN to FAD. Can also catalyze the phosphorylation of the toxic riboflavin analogs 8-demethyl-8-aminoriboflavin (AF) to 8-demethyl-8-aminoriboflavin mononucleotide (AFMN) and roseoflavin (RoF) to roseoflavin mononucleotide (RoFMN), and the adenylation of AFMN to 8-demethyl-8-aminoriboflavin adenine dinucleotide (AFAD). The protein is Bifunctional riboflavin kinase/FMN adenylyltransferase of Listeria monocytogenes serovar 1/2a (strain ATCC BAA-679 / EGD-e).